A 401-amino-acid polypeptide reads, in one-letter code: ADP-forming sulfoacetate-CoA ligase subunit SqwK (401 aa).

In terms of domain architecture, ATP-grasp spans 9 to 217 (KTVFSEHKIP…DNSVFRQPRF (209 aa)). 35 to 96 (KSVGFPSVVK…EEAVHIDKEI (62 aa)) is an ATP binding site. Positions 185 and 187 each coordinate Mg(2+).

It belongs to the succinate/malate CoA ligase beta subunit family. Forms a complex with SqwL. Mg(2+) is required as a cofactor.

It catalyses the reaction sulfoacetate + ATP + CoA = sulfoacetyl-CoA + ADP + phosphate. Functionally, part of a variant of the sulfo-TK pathway, a D-sulfoquinovose degradation pathway that produces sulfoacetate. Hydrolyzes sulfoacetyl-coenzyme A (sulfoacetyl-CoA) to produce sulfoacetate and CoA coupled with the phosphorylation of ADP to generate ATP. Cannot use succinate, acetate or 3-hydroxypropionate, and shows only residual activities with malonate and 3-sulfopropanoate. The chain is ADP-forming sulfoacetate-CoA ligase subunit SqwK from Acholeplasma sp.